Here is a 520-residue protein sequence, read N- to C-terminus: GMP synthase [glutamine-hydrolyzing] (520 aa).

The 194-residue stretch at Lys12 to Asp205 folds into the Glutamine amidotransferase type-1 domain. Catalysis depends on Cys89, which acts as the Nucleophile. Catalysis depends on residues His179 and Glu181. The region spanning Trp206–Arg395 is the GMPS ATP-PPase domain. ATP is bound at residue Ser233–Ser239.

Homodimer.

It carries out the reaction XMP + L-glutamine + ATP + H2O = GMP + L-glutamate + AMP + diphosphate + 2 H(+). Its pathway is purine metabolism; GMP biosynthesis; GMP from XMP (L-Gln route): step 1/1. Functionally, catalyzes the synthesis of GMP from XMP. The sequence is that of GMP synthase [glutamine-hydrolyzing] from Streptococcus agalactiae serotype III (strain NEM316).